The chain runs to 155 residues: Small ribosomal subunit protein uS7 (155 aa).

The protein belongs to the universal ribosomal protein uS7 family. As to quaternary structure, part of the 30S ribosomal subunit. Contacts proteins S9 and S11.

In terms of biological role, one of the primary rRNA binding proteins, it binds directly to 16S rRNA where it nucleates assembly of the head domain of the 30S subunit. Is located at the subunit interface close to the decoding center, probably blocks exit of the E-site tRNA. This chain is Small ribosomal subunit protein uS7, found in Xanthomonas oryzae pv. oryzae (strain MAFF 311018).